The chain runs to 330 residues: Lipoyl synthase (330 aa).

The disordered stretch occupies residues 1–31 (MSDAPIATSSEVTQSPADYDPTKKQKSAEKT). The span at 7-16 (ATSSEVTQSP) shows a compositional bias: polar residues. Over residues 20-31 (DPTKKQKSAEKT) the composition is skewed to basic and acidic residues. Residues cysteine 77, cysteine 82, cysteine 88, cysteine 103, cysteine 107, cysteine 110, and serine 317 each contribute to the [4Fe-4S] cluster site. Positions 88–306 (CFGKGTATFM…EEEAYKMGFT (219 aa)) constitute a Radical SAM core domain.

This sequence belongs to the radical SAM superfamily. Lipoyl synthase family. [4Fe-4S] cluster is required as a cofactor.

The protein localises to the cytoplasm. The catalysed reaction is [[Fe-S] cluster scaffold protein carrying a second [4Fe-4S](2+) cluster] + N(6)-octanoyl-L-lysyl-[protein] + 2 oxidized [2Fe-2S]-[ferredoxin] + 2 S-adenosyl-L-methionine + 4 H(+) = [[Fe-S] cluster scaffold protein] + N(6)-[(R)-dihydrolipoyl]-L-lysyl-[protein] + 4 Fe(3+) + 2 hydrogen sulfide + 2 5'-deoxyadenosine + 2 L-methionine + 2 reduced [2Fe-2S]-[ferredoxin]. The protein operates within protein modification; protein lipoylation via endogenous pathway; protein N(6)-(lipoyl)lysine from octanoyl-[acyl-carrier-protein]: step 2/2. In terms of biological role, catalyzes the radical-mediated insertion of two sulfur atoms into the C-6 and C-8 positions of the octanoyl moiety bound to the lipoyl domains of lipoate-dependent enzymes, thereby converting the octanoylated domains into lipoylated derivatives. The chain is Lipoyl synthase from Cupriavidus metallidurans (strain ATCC 43123 / DSM 2839 / NBRC 102507 / CH34) (Ralstonia metallidurans).